Reading from the N-terminus, the 1823-residue chain is Vitellogenin (1823 aa).

An N-terminal signal peptide occupies residues Met-1–Ala-14. At Gln-17 the chain carries Pyrrolidone carboxylic acid. A Vitellogenin domain is found at Phe-18–Val-658. The tract at residues Lys-953–Ala-986 is disordered. Over residues Gln-958–Gln-976 the composition is skewed to low complexity. N-linked (GlcNAc...) asparagine glycosylation occurs at Asn-1097. The tract at residues Ser-1119–Leu-1289 is disordered. 2 stretches are compositionally biased toward low complexity: residues Pro-1128 to Asp-1149 and Ser-1178 to Ser-1192. The span at Ser-1194 to Ala-1206 shows a compositional bias: basic residues. 2 stretches are compositionally biased toward low complexity: residues Ser-1217–Ser-1238 and Ser-1253–Ser-1286. N-linked (GlcNAc...) asparagine glycosylation occurs at Asn-1298. The tract at residues Val-1308–Ser-1351 is disordered. A compositionally biased stretch (low complexity) spans Ser-1323–Asp-1344. In terms of domain architecture, VWFD spans Ser-1564–Gly-1732. Cystine bridges form between Cys-1566-Cys-1695 and Cys-1589-Cys-1731. Asn-1675 is a glycosylation site (N-linked (GlcNAc...) asparagine).

Post-translationally, what corresponds to phosvitin in other species is lost during maturation of vitellogenin to lipovitellin. As to expression, produced by the liver, secreted into the blood and then sequestered by receptor mediated endocytosis into growing oocytes, where it is generally cleaved, giving rise to the respective yolk components lipovitellins 1 and 2.

Functionally, precursor of the major egg-yolk proteins that are sources of nutrients during early development of oviparous organisms. This chain is Vitellogenin, found in Ichthyomyzon unicuspis (Silver lamprey).